The chain runs to 252 residues: tRNA (guanine-N(1)-)-methyltransferase (252 aa).

S-adenosyl-L-methionine is bound by residues Gly-113 and 133 to 138; that span reads IGDYVL.

The protein belongs to the RNA methyltransferase TrmD family. In terms of assembly, homodimer.

Its subcellular location is the cytoplasm. The enzyme catalyses guanosine(37) in tRNA + S-adenosyl-L-methionine = N(1)-methylguanosine(37) in tRNA + S-adenosyl-L-homocysteine + H(+). Specifically methylates guanosine-37 in various tRNAs. The polypeptide is tRNA (guanine-N(1)-)-methyltransferase (Xanthomonas campestris pv. campestris (strain 8004)).